A 440-amino-acid polypeptide reads, in one-letter code: Cysteine proteinase (440 aa).

Residues 1 to 60 (MYSSSVVSNPNERLVNNRVENDLESSDDTLSTQAKPVSRLLTRKLLLGVVVLFFLAGVSV) form the signal peptide. The propeptide at 61–229 (VSYFLFSKYK…DEDVDLAKLT (169 aa)) is activation peptide. Residues 166-182 (VKGINRFSDLTEREFYK) are involved in processing to yield active enzymes. Residue Asn206 is glycosylated (N-linked (GlcNAc...) asparagine). An intrachain disulfide couples Cys250 to Cys291. Residues Cys253, His382, and Asn404 contribute to the active site.

This sequence belongs to the peptidase C1 family.

This chain is Cysteine proteinase, found in Theileria parva (East coast fever infection agent).